Here is a 314-residue protein sequence, read N- to C-terminus: 3'-5' exoribonuclease YhaM (314 aa).

The 117-residue stretch at 163-279 (HVVSMLHLAK…LHYIDNLDAK (117 aa)) folds into the HD domain.

The protein belongs to the YhaM family.

Functionally, shows a 3'-5' exoribonuclease activity. The protein is 3'-5' exoribonuclease YhaM of Bacillus pumilus (strain SAFR-032).